A 453-amino-acid polypeptide reads, in one-letter code: Ribosomal protein uS12 methylthiotransferase RimO (453 aa).

Residues Pro9 to Pro124 enclose the MTTase N-terminal domain. [4Fe-4S] cluster-binding residues include Cys18, Cys54, Cys83, Cys155, Cys159, and Cys162. The 242-residue stretch at Leu141–Arg382 folds into the Radical SAM core domain. A TRAM domain is found at Gln385–Val453.

This sequence belongs to the methylthiotransferase family. RimO subfamily. It depends on [4Fe-4S] cluster as a cofactor.

The protein localises to the cytoplasm. The enzyme catalyses L-aspartate(89)-[ribosomal protein uS12]-hydrogen + (sulfur carrier)-SH + AH2 + 2 S-adenosyl-L-methionine = 3-methylsulfanyl-L-aspartate(89)-[ribosomal protein uS12]-hydrogen + (sulfur carrier)-H + 5'-deoxyadenosine + L-methionine + A + S-adenosyl-L-homocysteine + 2 H(+). In terms of biological role, catalyzes the methylthiolation of an aspartic acid residue of ribosomal protein uS12. In Ralstonia pickettii (strain 12J), this protein is Ribosomal protein uS12 methylthiotransferase RimO.